The following is a 234-amino-acid chain: Phosphoribosylformylglycinamidine synthase subunit PurQ (234 aa).

The Glutamine amidotransferase type-1 domain occupies 5–234; sequence TVGIVVFPGS…ESLFAHLAGA (230 aa). C89 functions as the Nucleophile in the catalytic mechanism. Residues H206 and E208 contribute to the active site.

In terms of assembly, part of the FGAM synthase complex composed of 1 PurL, 1 PurQ and 2 PurS subunits.

The protein localises to the cytoplasm. The enzyme catalyses N(2)-formyl-N(1)-(5-phospho-beta-D-ribosyl)glycinamide + L-glutamine + ATP + H2O = 2-formamido-N(1)-(5-O-phospho-beta-D-ribosyl)acetamidine + L-glutamate + ADP + phosphate + H(+). It catalyses the reaction L-glutamine + H2O = L-glutamate + NH4(+). It participates in purine metabolism; IMP biosynthesis via de novo pathway; 5-amino-1-(5-phospho-D-ribosyl)imidazole from N(2)-formyl-N(1)-(5-phospho-D-ribosyl)glycinamide: step 1/2. Functionally, part of the phosphoribosylformylglycinamidine synthase complex involved in the purines biosynthetic pathway. Catalyzes the ATP-dependent conversion of formylglycinamide ribonucleotide (FGAR) and glutamine to yield formylglycinamidine ribonucleotide (FGAM) and glutamate. The FGAM synthase complex is composed of three subunits. PurQ produces an ammonia molecule by converting glutamine to glutamate. PurL transfers the ammonia molecule to FGAR to form FGAM in an ATP-dependent manner. PurS interacts with PurQ and PurL and is thought to assist in the transfer of the ammonia molecule from PurQ to PurL. In Chlorobaculum tepidum (strain ATCC 49652 / DSM 12025 / NBRC 103806 / TLS) (Chlorobium tepidum), this protein is Phosphoribosylformylglycinamidine synthase subunit PurQ.